The primary structure comprises 429 residues: Adenylosuccinate synthetase (429 aa).

GTP-binding positions include 12–18 and 40–42; these read GDEGKGK and GHT. The Proton acceptor role is filled by D13. Mg(2+) contacts are provided by D13 and G40. Residues 13–16, 38–41, T128, R142, Q223, T238, and R302 each bind IMP; these read DEGK and NAGH. H41 functions as the Proton donor in the catalytic mechanism. 298–304 serves as a coordination point for substrate; that stretch reads TTTGRAR. Residues R304, 330-332, and 412-414 contribute to the GTP site; these read SID and SVG.

This sequence belongs to the adenylosuccinate synthetase family. Homodimer. Mg(2+) serves as cofactor.

It is found in the cytoplasm. The enzyme catalyses IMP + L-aspartate + GTP = N(6)-(1,2-dicarboxyethyl)-AMP + GDP + phosphate + 2 H(+). Its pathway is purine metabolism; AMP biosynthesis via de novo pathway; AMP from IMP: step 1/2. Plays an important role in the de novo pathway of purine nucleotide biosynthesis. Catalyzes the first committed step in the biosynthesis of AMP from IMP. The polypeptide is Adenylosuccinate synthetase (Oceanobacillus iheyensis (strain DSM 14371 / CIP 107618 / JCM 11309 / KCTC 3954 / HTE831)).